Consider the following 98-residue polypeptide: MEAVERIENPYGIRLRIFLQPKASRDQIVGLHDSELKIAITAPPVDGAANAHLLKYLSKLFKVPKSSIVLEKGELQRHNKQLFVPEPKLIPKEIEALL.

This sequence belongs to the UPF0235 family.

This is UPF0235 protein APJL_1398 from Actinobacillus pleuropneumoniae serotype 3 (strain JL03).